The chain runs to 258 residues: Type III pantothenate kinase (258 aa).

6–13 is an ATP binding site; it reads DVGNTNIV. Substrate is bound by residues Tyr-100 and 107–110; that span reads GADR. Catalysis depends on Asp-109, which acts as the Proton acceptor. Asp-129 contributes to the K(+) binding site. Thr-132 serves as a coordination point for ATP. A substrate-binding site is contributed by Thr-184.

This sequence belongs to the type III pantothenate kinase family. Homodimer. NH4(+) is required as a cofactor. Requires K(+) as cofactor.

The protein resides in the cytoplasm. The enzyme catalyses (R)-pantothenate + ATP = (R)-4'-phosphopantothenate + ADP + H(+). It participates in cofactor biosynthesis; coenzyme A biosynthesis; CoA from (R)-pantothenate: step 1/5. Catalyzes the phosphorylation of pantothenate (Pan), the first step in CoA biosynthesis. This chain is Type III pantothenate kinase, found in Clostridium botulinum (strain Kyoto / Type A2).